The chain runs to 540 residues: Anti-sigma-I factor RsgI7 (540 aa).

A RsgI N-terminal anti-sigma domain is found at 1–48 (MRAMVVDMNDKYAVVVNKEGQYIKIKRKAEHRLGYQVELPDRVIGFER). The Cytoplasmic segment spans residues 1-50 (MRAMVVDMNDKYAVVVNKEGQYIKIKRKAEHRLGYQVELPDRVIGFERRT). Residues 51–73 (LLKVVSVAAALLIVSSISFAVYS) traverse the membrane as a helical segment. The Extracellular segment spans residues 74 to 540 (YNLPYSYVNV…PGKEILKKRC (467 aa)). 5 stretches are compositionally biased toward basic and acidic residues: residues 238–256 (DIKKVPNENNRKDDDKKVN), 319–329 (SGIDKGNKDSK), 338–351 (NDVKKDNKDNKTNS), 359–370 (VSKDNKNDKADG), and 398–419 (SKDDKDNKHVDSKDKMNNEDNK). Disordered regions lie at residues 238–429 (DIKK…CPQY) and 481–540 (QEEQ…KKRC). Residues 451–501 (KEDMTKQNDEWFKKMQEEQKKQYDEWLKKMQEEQKKQHDEWVKKMEEMKNT) adopt a coiled-coil conformation.

As to quaternary structure, interacts (via RsgI N-terminal anti-sigma domain) with SigI7.

Its subcellular location is the cell membrane. Anti-sigma factor for SigI7. Negatively regulates SigI7 activity through direct interaction. The sequence is that of Anti-sigma-I factor RsgI7 from Acetivibrio thermocellus (strain ATCC 27405 / DSM 1237 / JCM 9322 / NBRC 103400 / NCIMB 10682 / NRRL B-4536 / VPI 7372) (Clostridium thermocellum).